Consider the following 278-residue polypeptide: Shikimate dehydrogenase (NADP(+)) (278 aa).

Shikimate is bound by residues 23–25 and T70; that span reads SRS. K74 serves as the catalytic Proton acceptor. E86 contributes to the NADP(+) binding site. Shikimate-binding residues include N95 and D110. Residues 135–139, 159–164, and M224 contribute to the NADP(+) site; these read GAGGA and NRTKEK. Y226 lines the shikimate pocket. An NADP(+)-binding site is contributed by G248.

This sequence belongs to the shikimate dehydrogenase family. Homodimer.

It catalyses the reaction shikimate + NADP(+) = 3-dehydroshikimate + NADPH + H(+). It functions in the pathway metabolic intermediate biosynthesis; chorismate biosynthesis; chorismate from D-erythrose 4-phosphate and phosphoenolpyruvate: step 4/7. Involved in the biosynthesis of the chorismate, which leads to the biosynthesis of aromatic amino acids. Catalyzes the reversible NADPH linked reduction of 3-dehydroshikimate (DHSA) to yield shikimate (SA). The sequence is that of Shikimate dehydrogenase (NADP(+)) from Alcanivorax borkumensis (strain ATCC 700651 / DSM 11573 / NCIMB 13689 / SK2).